The primary structure comprises 505 residues: 2,3-bisphosphoglycerate-independent phosphoglycerate mutase (505 aa).

Mn(2+) contacts are provided by D13 and S63. S63 functions as the Phosphoserine intermediate in the catalytic mechanism. Substrate is bound by residues H124, 153 to 154 (RD), R183, R189, 254 to 257 (RADR), and K330. Mn(2+) contacts are provided by D396, H400, D437, H438, and H456.

The protein belongs to the BPG-independent phosphoglycerate mutase family. Monomer. The cofactor is Mn(2+).

The enzyme catalyses (2R)-2-phosphoglycerate = (2R)-3-phosphoglycerate. The protein operates within carbohydrate degradation; glycolysis; pyruvate from D-glyceraldehyde 3-phosphate: step 3/5. Functionally, catalyzes the interconversion of 2-phosphoglycerate and 3-phosphoglycerate. The chain is 2,3-bisphosphoglycerate-independent phosphoglycerate mutase from Ruegeria pomeroyi (strain ATCC 700808 / DSM 15171 / DSS-3) (Silicibacter pomeroyi).